Consider the following 536-residue polypeptide: Prickle planar cell polarity protein 3-B (536 aa).

The region spanning 66–175 (SGSQRDSLCD…CVRPISGTMS (110 aa)) is the PET domain. LIM zinc-binding domains are found at residues 177-241 (TVCQ…ELKR), 242-302 (PRCL…LYAQ), and 305-366 (DSCG…HTKS). Residues 418 to 536 (PTQAAPARSL…KKKDKSCFLS (119 aa)) form a disordered region. Positions 438–448 (FSRECPNRRSL) are enriched in basic and acidic residues. Positions 450–467 (DLSSHTRTPTRVTFQLPS) are enriched in polar residues. Residues 474-487 (SISFSRPSFTSSSS) show a composition bias toward low complexity.

This sequence belongs to the prickle / espinas / testin family. As to quaternary structure, interacts with vangl2 via its C-terminus. The vangl2-dependent membrane recruitment of prickle3 is a prerequisite for its polarization. Interacts with wtip. Wtip is involved in the recruitment of prickle3 to the basal body.

It localises to the cytoplasm. The protein resides in the cell membrane. Its subcellular location is the mitochondrion. In terms of biological role, involved in the planar cell polarity (PCP) pathway that is essential for the polarization of epithelial cells during morphogenetic processes, including gastrulation and neurulation. PCP is maintained by two molecular modules, the global and the core modules. Proteins of the core module include the proteins Frizzled (Fz), Disheveled (Dsh), Van Gogh (Vang), Prickle (Pk), Flamingo (Fmi, Celsr) and Diego (Dgo). The core module proteins develop subcellular asymmetry, accumulating in two groups on opposite sides of epithelial cells. Distinct proximal (Vang, Pk and Fmi) and distal (Fz, Dsh, Dgo and Fmi) complexes segregate to opposite sides of the cell, where they interact with the opposite complex in the neighboring cell at or near the adherents junctions. Directional information to orient polarization with respect to the tissue axes is provided by the global module which involves Wnt proteins. Involved in the organization of the basal body. Involved in cilia growth and positioning. Required for proper assembly, stability, and function of mitochondrial membrane ATP synthase (mitochondrial complex V). This chain is Prickle planar cell polarity protein 3-B (prickle3-b), found in Xenopus laevis (African clawed frog).